The primary structure comprises 610 residues: UvrABC system protein C (610 aa).

The GIY-YIG domain occupies 13–91 (HLPGVYRMYD…IKENQPKYNV (79 aa)). In terms of domain architecture, UVR spans 201–236 (GQVVEHLVQKMENAAQELDFEAAARFRDQIQSVRAV).

The protein belongs to the UvrC family. As to quaternary structure, interacts with UvrB in an incision complex.

Its subcellular location is the cytoplasm. The UvrABC repair system catalyzes the recognition and processing of DNA lesions. UvrC both incises the 5' and 3' sides of the lesion. The N-terminal half is responsible for the 3' incision and the C-terminal half is responsible for the 5' incision. The chain is UvrABC system protein C from Actinobacillus pleuropneumoniae serotype 7 (strain AP76).